A 176-amino-acid chain; its full sequence is Tubulin polymerization-promoting protein family member 3 (176 aa).

Ala2 is modified (N-acetylalanine).

Belongs to the TPPP family.

Its subcellular location is the cytoplasm. It is found in the cytoskeleton. Its function is as follows. Regulator of microtubule dynamic that has microtubule bundling activity. Required for embryo implantation; possibly by regulating beta-catenin. Also required for decidualization via regulation of beta-catenin. This Rattus norvegicus (Rat) protein is Tubulin polymerization-promoting protein family member 3 (Tppp3).